A 188-amino-acid polypeptide reads, in one-letter code: MEANGIENLTNPNQEREFIRRHHKHELVDNQCSSTLVKHINAPVHIVWSLVRRFDQPQKYKPFISRCVVKGNMEIGTVREVDVKSGLPATRSTERLELLDDNEHILSIRIVGGDHRLKNYSSIISLHPETIEGRIGTLVIESFVVDVPEGNTKDETCYFVEALIKCNLKSLADISERLAVQDTTESRV.

The segment at 25 to 176 (HELVDNQCSS…NLKSLADISE (152 aa)) is START-like. A disulfide bridge links Cys32 with Cys157. Lys61 contacts abscisate. A Phosphothreonine; by CARK1 modification is found at Thr77. The Gate loop signature appears at 85–89 (SGLPA). Abscisate-binding positions include 89-94 (ATRSTE), 116-122 (RLKNYSS), and Glu141. The Latch loop motif lies at 115–117 (HRL).

It belongs to the PYR/PYL/RCAR abscisic acid intracellular receptor family. Monomer. Homodimer. Binds ABA on one subunit only. interacts with ABI1 and HAB1, and possibly with other PP2Cs. Binds to CARs protein in an ABA-independent manner, both at the plasma membrane and in the nucleus. Interacts directly with CAR1 and CAR4. Interacts with MYB44, MYB73 and MYB77 in an ABA-independent manner. Interacts with DDA1. Interacts with CARK1 in the cytosol. Binds to ABI1 when phosphorylated by CARK1. Interacts with AIP1 in the nucleus. Post-translationally, phosphorylated by CARK1 especially in response to abscisic acid (ABA); this phosphorylation promotes its stability and inhibitory ability to ABI1. Ubiquitinated in DDA1- and CDD complex-dependent manner. Ubiquitination leads to its subsequent proteasomal degradation.

The protein resides in the cytoplasm. It is found in the cytosol. Its subcellular location is the nucleus. It localises to the cell membrane. In terms of biological role, receptor for abscisic acid (ABA) required for ABA-mediated responses such as stomatal closure and germination inhibition. Inhibits the activity of group-A protein phosphatases type 2C (PP2Cs) in an ABA-independent manner but more efficiently when activated by ABA. Confers enhanced sensitivity to ABA. Can be activated by both (-)-ABA and (+)-ABA. Mediates crosstalk between ABA and auxin signaling to regulate lateral root growth. Required for lateral root growth suppression by ABA. In response to auxin, promotes lateral root growth by enhancing MYB77-dependent transcription of the auxin-responsive gene IAA19. Enhances the abilities of MYB44 and MYB73 to activate IAA19 gene. The polypeptide is Abscisic acid receptor PYL8 (Arabidopsis thaliana (Mouse-ear cress)).